The chain runs to 85 residues: uncharacterized protein (85 aa).

An N-terminal signal peptide occupies residues 1-20; sequence MIKLFCVLAAFISINSACQS.

This is an uncharacterized protein from Invertebrate iridescent virus 6 (IIV-6).